A 210-amino-acid polypeptide reads, in one-letter code: Ribosomal RNA large subunit methyltransferase E (210 aa).

The S-adenosyl-L-methionine site is built by Gly60, Trp62, Asp85, Asp101, and Asp126. The Proton acceptor role is filled by Lys166.

Belongs to the class I-like SAM-binding methyltransferase superfamily. RNA methyltransferase RlmE family.

It localises to the cytoplasm. It carries out the reaction uridine(2552) in 23S rRNA + S-adenosyl-L-methionine = 2'-O-methyluridine(2552) in 23S rRNA + S-adenosyl-L-homocysteine + H(+). Its function is as follows. Specifically methylates the uridine in position 2552 of 23S rRNA at the 2'-O position of the ribose in the fully assembled 50S ribosomal subunit. The sequence is that of Ribosomal RNA large subunit methyltransferase E from Bordetella pertussis (strain Tohama I / ATCC BAA-589 / NCTC 13251).